Here is a 99-residue protein sequence, read N- to C-terminus: Integration host factor subunit alpha (99 aa).

Belongs to the bacterial histone-like protein family. As to quaternary structure, heterodimer of an alpha and a beta chain.

Functionally, this protein is one of the two subunits of integration host factor, a specific DNA-binding protein that functions in genetic recombination as well as in transcriptional and translational control. This Anaeromyxobacter sp. (strain Fw109-5) protein is Integration host factor subunit alpha.